Reading from the N-terminus, the 570-residue chain is Sulfite reductase [NADPH] hemoprotein beta-component (570 aa).

Residues cysteine 434, cysteine 440, cysteine 479, and cysteine 483 each contribute to the [4Fe-4S] cluster site. Cysteine 483 serves as a coordination point for siroheme.

This sequence belongs to the nitrite and sulfite reductase 4Fe-4S domain family. In terms of assembly, alpha(8)-beta(8). The alpha component is a flavoprotein, the beta component is a hemoprotein. Siroheme is required as a cofactor. Requires [4Fe-4S] cluster as cofactor.

The enzyme catalyses hydrogen sulfide + 3 NADP(+) + 3 H2O = sulfite + 3 NADPH + 4 H(+). The protein operates within sulfur metabolism; hydrogen sulfide biosynthesis; hydrogen sulfide from sulfite (NADPH route): step 1/1. In terms of biological role, component of the sulfite reductase complex that catalyzes the 6-electron reduction of sulfite to sulfide. This is one of several activities required for the biosynthesis of L-cysteine from sulfate. This Shigella flexneri protein is Sulfite reductase [NADPH] hemoprotein beta-component.